The chain runs to 476 residues: Carbamoyl phosphate synthase arginine-specific small chain (476 aa).

Residues 1–24 constitute a mitochondrion transit peptide; the sequence is MFSHLLKPAARSAGLLGHVNRRYL. In terms of domain architecture, Glutamine amidotransferase type-1 spans 228–415; the sequence is HVALIDCGVK…IQNVQRYKDH (188 aa). The Nucleophile role is filled by Cys-304. Active-site residues include His-388 and Glu-390.

Belongs to the CarA family. As to quaternary structure, heterodimer composed of 2 chains; the small (or glutamine) chain promotes the hydrolysis of glutamine to ammonia, which is used by the large (or ammonia) chain to synthesize carbamoyl phosphate.

The protein localises to the mitochondrion matrix. It catalyses the reaction hydrogencarbonate + L-glutamine + 2 ATP + H2O = carbamoyl phosphate + L-glutamate + 2 ADP + phosphate + 2 H(+). The enzyme catalyses L-glutamine + H2O = L-glutamate + NH4(+). It participates in amino-acid biosynthesis; L-arginine biosynthesis; carbamoyl phosphate from bicarbonate: step 1/1. Functionally, small subunit of the arginine-specific carbamoyl phosphate synthase (CPSase). CPSase catalyzes the formation of carbamoyl phosphate from the ammonia moiety of glutamine, carbonate, and phosphate donated by ATP, the first step of the arginine biosynthetic pathway. The small subunit (glutamine amidotransferase) binds and cleaves glutamine to supply the large subunit with the substrate ammonia. The polypeptide is Carbamoyl phosphate synthase arginine-specific small chain (CPA1) (Phaeosphaeria nodorum (strain SN15 / ATCC MYA-4574 / FGSC 10173) (Glume blotch fungus)).